The sequence spans 174 residues: NADH-ubiquinone oxidoreductase chain 6 (174 aa).

The next 4 membrane-spanning stretches (helical) occupy residues 25–45 (SMGLMLLIQTFLTCLITGIYV), 48–68 (FWFSYVLFLIFLGGMLILFIY), 82–102 (FKLTMFSLVLFSLSMVIFFIL), and 143–163 (LITLLLINYLFLTLLVTVKIT).

Belongs to the complex I subunit 6 family.

It is found in the mitochondrion membrane. It catalyses the reaction a ubiquinone + NADH + 5 H(+)(in) = a ubiquinol + NAD(+) + 4 H(+)(out). Its function is as follows. Core subunit of the mitochondrial membrane respiratory chain NADH dehydrogenase (Complex I) that is believed to belong to the minimal assembly required for catalysis. Complex I functions in the transfer of electrons from NADH to the respiratory chain. The immediate electron acceptor for the enzyme is believed to be ubiquinone. This chain is NADH-ubiquinone oxidoreductase chain 6 (mt:ND6), found in Anopheles gambiae (African malaria mosquito).